The primary structure comprises 1317 residues: Toxin protein Tse5 (1317 aa).

The disordered stretch occupies residues 395-419 (GRETRRRRDGQGRMLEEESPGKARY). Over residues 403–415 (DGQGRMLEEESPG) the composition is skewed to basic and acidic residues.

Toxin secreted by the H1 type VI (H1-T6SS) secretion system that acts on bacterial target cells. The producing bacterium is protected by a cognate immunity protein. The protein is Toxin protein Tse5 of Pseudomonas aeruginosa (strain ATCC 15692 / DSM 22644 / CIP 104116 / JCM 14847 / LMG 12228 / 1C / PRS 101 / PAO1).